A 161-amino-acid chain; its full sequence is Phosphopantetheine adenylyltransferase (161 aa).

Residue Ser-8 participates in substrate binding. ATP-binding positions include 8–9 (SF) and His-16. Substrate-binding residues include Lys-40, Leu-72, and Arg-86. Residues 87 to 89 (GLR), Glu-97, and 122 to 128 (FSFVSSS) each bind ATP.

This sequence belongs to the bacterial CoaD family. As to quaternary structure, homohexamer. Requires Mg(2+) as cofactor.

It is found in the cytoplasm. It carries out the reaction (R)-4'-phosphopantetheine + ATP + H(+) = 3'-dephospho-CoA + diphosphate. Its pathway is cofactor biosynthesis; coenzyme A biosynthesis; CoA from (R)-pantothenate: step 4/5. Functionally, reversibly transfers an adenylyl group from ATP to 4'-phosphopantetheine, yielding dephospho-CoA (dPCoA) and pyrophosphate. In Thermotoga neapolitana (strain ATCC 49049 / DSM 4359 / NBRC 107923 / NS-E), this protein is Phosphopantetheine adenylyltransferase.